Here is a 150-residue protein sequence, read N- to C-terminus: Small ribosomal subunit protein uS7c (150 aa).

Belongs to the universal ribosomal protein uS7 family. As to quaternary structure, part of the 30S ribosomal subunit.

It localises to the plastid. The protein localises to the chloroplast. Its function is as follows. One of the primary rRNA binding proteins, it binds directly to 16S rRNA where it nucleates assembly of the head domain of the 30S subunit. In Huperzia lucidula (Shining clubmoss), this protein is Small ribosomal subunit protein uS7c (rps7).